The sequence spans 491 residues: uncharacterized protein (491 aa).

Residue 267–274 (GIQGTGKS) participates in ATP binding.

Belongs to the AAA ATPase family. Highly divergent.

The protein resides in the plastid. It localises to the chloroplast. This is an uncharacterized protein from Gracilaria tenuistipitata var. liui (Red alga).